We begin with the raw amino-acid sequence, 228 residues long: Phosphoglycolate phosphatase (228 aa).

The Nucleophile role is filled by Asp-12. Positions 12, 14, and 177 each coordinate Mg(2+).

It belongs to the HAD-like hydrolase superfamily. CbbY/CbbZ/Gph/YieH family. Requires Mg(2+) as cofactor.

The catalysed reaction is 2-phosphoglycolate + H2O = glycolate + phosphate. Its pathway is organic acid metabolism; glycolate biosynthesis; glycolate from 2-phosphoglycolate: step 1/1. Its function is as follows. Specifically catalyzes the dephosphorylation of 2-phosphoglycolate. Is involved in the dissimilation of the intracellular 2-phosphoglycolate formed during the DNA repair of 3'-phosphoglycolate ends, a major class of DNA lesions induced by oxidative stress. This Vibrio vulnificus (strain YJ016) protein is Phosphoglycolate phosphatase.